Consider the following 210-residue polypeptide: Guanylate kinase (210 aa).

The region spanning 8-188 (GNLFIIAAPS…SLASLEHIVL (181 aa)) is the Guanylate kinase-like domain. ATP is bound at residue 15 to 22 (APSGAGKS).

Belongs to the guanylate kinase family.

It is found in the cytoplasm. It carries out the reaction GMP + ATP = GDP + ADP. Essential for recycling GMP and indirectly, cGMP. The polypeptide is Guanylate kinase (Idiomarina loihiensis (strain ATCC BAA-735 / DSM 15497 / L2-TR)).